The primary structure comprises 86 residues: Neurotoxin homolog NL1 (86 aa).

The first 21 residues, 1 to 21 (MKTLLLTLVVVTMVCMDLGYT), serve as a signal peptide directing secretion. 4 disulfide bridges follow: Cys-24–Cys-45, Cys-38–Cys-62, Cys-66–Cys-78, and Cys-79–Cys-84.

This sequence belongs to the three-finger toxin family. Short-chain subfamily. Orphan group VIII (haditoxin) sub-subfamily. Homodimer; non-covalently linked. In terms of tissue distribution, expressed by the venom gland.

It localises to the secreted. Antagonist of muscle and neuronal nicotinic acetylcholine receptors (nAChR) with highest affinity for neuronal alpha-7/CHRNA7 nAChRs. This Naja atra (Chinese cobra) protein is Neurotoxin homolog NL1.